The sequence spans 333 residues: Flagellar P-ring protein (333 aa).

A signal peptide spans 1–22; the sequence is MRRNILSMFLFITLIIYSSIFA.

The protein belongs to the FlgI family. As to quaternary structure, the basal body constitutes a major portion of the flagellar organelle and consists of four rings (L,P,S, and M) mounted on a central rod.

Its subcellular location is the periplasm. The protein resides in the bacterial flagellum basal body. Its function is as follows. Assembles around the rod to form the L-ring and probably protects the motor/basal body from shearing forces during rotation. The polypeptide is Flagellar P-ring protein (Fervidobacterium nodosum (strain ATCC 35602 / DSM 5306 / Rt17-B1)).